A 281-amino-acid polypeptide reads, in one-letter code: Para-Rep C1 (281 aa).

The 95-residue stretch at 3 to 97 folds into the CRESS-DNA virus Rep endonuclease domain; sequence TLQGTFWCFT…VAGPWTYGEL (95 aa). The RCR-1 signature appears at 10–13; sequence CFTL. 2 residues coordinate a divalent metal cation: E36 and H42. The short motif at 42–44 is the RCR-2 element; it reads HLQ. The Nuclear localization signal signature appears at 51-71; it reads KRSTLKMMKELLPGAHLEVSK. Y80 serves as the catalytic For DNA cleavage activity. Positions 80–83 match the RCR-3 motif; sequence YAMK. E85 contacts a divalent metal cation. The Nuclear localization signal signature appears at 97-103; that stretch reads LLKKGSN. 173–181 provides a ligand contact to ATP; it reads GPQGGEGKT.

It belongs to the nanoviridea/circoviridae replication-associated protein family. As to quaternary structure, homooligomer (Potential). Rep binds to repeated DNA motifs (iterons). Mg(2+) serves as cofactor. It depends on Mn(2+) as a cofactor.

The protein resides in the host nucleus. It catalyses the reaction ATP + H2O = ADP + phosphate + H(+). Initiates and terminates the replication only of its own subviral DNA molecule. The closed circular ssDNA genome is first converted to a superhelical dsDNA. Rep binds a specific hairpin at the genome origin of replication. Introduces an endonucleolytic nick within the intergenic region of the genome, thereby initiating the rolling circle replication (RCR). Following cleavage, binds covalently to the 5'-phosphate of DNA as a tyrosyl ester. The cleavage gives rise to a free 3'-OH that serves as a primer for the cellular DNA polymerase. The polymerase synthesizes the (+) strand DNA by rolling circle mechanism. After one round of replication, a Rep-catalyzed nucleotidyl transfer reaction releases a circular single-stranded virus genome, thereby terminating the replication. Displays origin-specific DNA cleavage, nucleotidyl transferase, ATPase and helicase activities. This is Para-Rep C1 (C1) from Milk vetch dwarf C1 alphasatellite (MVDC1A).